Consider the following 239-residue polypeptide: Tetrahydromethanopterin S-methyltransferase subunit A (239 aa).

The Cytoplasmic segment spans residues 1 to 215 (MANKKSPAAT…EAAMIAKFNS (215 aa)). 5-hydroxybenzimidazolylcob(I)amide is bound at residue H85. A helical membrane pass occupies residues 216 to 238 (GYYNGKIQGIAIGLFLSILVFSL). A topological domain (extracellular) is located at residue L239.

The protein belongs to the MtrA family. As to quaternary structure, the complex is composed of 8 subunits; MtrA, MtrB, MtrC, MtrD, MtrE, MtrF, MtrG and MtrH. 5-hydroxybenzimidazolylcob(I)amide serves as cofactor.

Its subcellular location is the cell membrane. It carries out the reaction 5-methyl-5,6,7,8-tetrahydromethanopterin + coenzyme M + 2 Na(+)(in) = 5,6,7,8-tetrahydromethanopterin + methyl-coenzyme M + 2 Na(+)(out). It functions in the pathway one-carbon metabolism; methanogenesis from CO(2); methyl-coenzyme M from 5,10-methylene-5,6,7,8-tetrahydromethanopterin: step 2/2. Functionally, part of a complex that catalyzes the formation of methyl-coenzyme M and tetrahydromethanopterin from coenzyme M and methyl-tetrahydromethanopterin. This is an energy-conserving, sodium-ion translocating step. The sequence is that of Tetrahydromethanopterin S-methyltransferase subunit A from Methanococcus maripaludis (strain C7 / ATCC BAA-1331).